The following is a 29-amino-acid chain: Cytochrome b6-f complex subunit 8 (29 aa).

A helical transmembrane segment spans residues 3–23; it reads IITFGWVAVAAFFALSIAFVV.

It belongs to the PetN family. The 4 large subunits of the cytochrome b6-f complex are cytochrome b6, subunit IV (17 kDa polypeptide, PetD), cytochrome f and the Rieske protein, while the 4 small subunits are PetG, PetL, PetM and PetN. The complex functions as a dimer.

The protein resides in the cellular thylakoid membrane. Component of the cytochrome b6-f complex, which mediates electron transfer between photosystem II (PSII) and photosystem I (PSI), cyclic electron flow around PSI, and state transitions. In Synechococcus sp. (strain JA-3-3Ab) (Cyanobacteria bacterium Yellowstone A-Prime), this protein is Cytochrome b6-f complex subunit 8.